The chain runs to 370 residues: Dual-specificity RNA methyltransferase RlmN (370 aa).

The active-site Proton acceptor is the Glu-93. A Radical SAM core domain is found at 99–337 (AEGRGTLCVS…VTTVRKTRGD (239 aa)). Residues Cys-106 and Cys-343 are joined by a disulfide bond. 3 residues coordinate [4Fe-4S] cluster: Cys-113, Cys-117, and Cys-120. S-adenosyl-L-methionine is bound by residues 167–168 (GE), Ser-199, 221–223 (SLH), and Asn-300. The S-methylcysteine intermediate role is filled by Cys-343.

Belongs to the radical SAM superfamily. RlmN family. The cofactor is [4Fe-4S] cluster.

It is found in the cytoplasm. It catalyses the reaction adenosine(2503) in 23S rRNA + 2 reduced [2Fe-2S]-[ferredoxin] + 2 S-adenosyl-L-methionine = 2-methyladenosine(2503) in 23S rRNA + 5'-deoxyadenosine + L-methionine + 2 oxidized [2Fe-2S]-[ferredoxin] + S-adenosyl-L-homocysteine. It carries out the reaction adenosine(37) in tRNA + 2 reduced [2Fe-2S]-[ferredoxin] + 2 S-adenosyl-L-methionine = 2-methyladenosine(37) in tRNA + 5'-deoxyadenosine + L-methionine + 2 oxidized [2Fe-2S]-[ferredoxin] + S-adenosyl-L-homocysteine. Functionally, specifically methylates position 2 of adenine 2503 in 23S rRNA and position 2 of adenine 37 in tRNAs. m2A2503 modification seems to play a crucial role in the proofreading step occurring at the peptidyl transferase center and thus would serve to optimize ribosomal fidelity. The chain is Dual-specificity RNA methyltransferase RlmN from Francisella tularensis subsp. tularensis (strain FSC 198).